Reading from the N-terminus, the 107-residue chain is Integration host factor subunit alpha (107 aa).

Belongs to the bacterial histone-like protein family. In terms of assembly, heterodimer of an alpha and a beta chain.

This protein is one of the two subunits of integration host factor, a specific DNA-binding protein that functions in genetic recombination as well as in transcriptional and translational control. This chain is Integration host factor subunit alpha, found in Brucella abortus (strain S19).